Consider the following 602-residue polypeptide: Potassium-transporting ATPase potassium-binding subunit (602 aa).

4 helical membrane passes run 5-25, 65-85, 136-156, and 179-199; these read AMLQ…PLGA, GYAV…YALQ, GLTV…IALI, and LYVL…QGAI. Positions 221 to 248 are disordered; the sequence is QDAKGNPVLGKDGKPVMEDKTSQTQTLP. Residues 231-241 are compositionally biased toward basic and acidic residues; it reads KDGKPVMEDKT. Transmembrane regions (helical) follow at residues 283–303, 312–332, 419–439, 458–478, 523–543, and 566–586; these read LANF…CFLF, QGWA…VVET, GLYG…LMVG, AITI…AVSL, IMTG…ILAI, and LFVT…YVPA.

It belongs to the KdpA family. In terms of assembly, the system is composed of three essential subunits: KdpA, KdpB and KdpC.

It is found in the cell inner membrane. Functionally, part of the high-affinity ATP-driven potassium transport (or Kdp) system, which catalyzes the hydrolysis of ATP coupled with the electrogenic transport of potassium into the cytoplasm. This subunit binds the periplasmic potassium ions and delivers the ions to the membrane domain of KdpB through an intramembrane tunnel. The sequence is that of Potassium-transporting ATPase potassium-binding subunit from Chromobacterium violaceum (strain ATCC 12472 / DSM 30191 / JCM 1249 / CCUG 213 / NBRC 12614 / NCIMB 9131 / NCTC 9757 / MK).